Reading from the N-terminus, the 370-residue chain is Prolactin-releasing peptide receptor (370 aa).

The disordered stretch occupies residues 1 to 34; that stretch reads MTSLPPGTTGDPDLFSGPSPAGSTPANQSAEASE. At 1–62 the chain is on the extracellular side; that stretch reads MTSLPPGTTG…LQLVHQLKGL (62 aa). The span at 21–34 shows a compositional bias: polar residues; the sequence is AGSTPANQSAEASE. N-linked (GlcNAc...) asparagine glycosylation is found at asparagine 27 and asparagine 36. The helical transmembrane segment at 63–83 threads the bilayer; sequence IVMLYSIVVVVGLVGNCLLVL. The Cytoplasmic segment spans residues 84–101; it reads VIARVRRLHNVTNFLIGN. Residues 102–122 form a helical membrane-spanning segment; the sequence is LALSDVLMCAACVPLTLAYAF. Topologically, residues 123–126 are extracellular; the sequence is EPRG. The helical transmembrane segment at 127–147 threads the bilayer; sequence WVFGGGLCHLVFFLQPVTVYV. An intrachain disulfide couples cysteine 134 to cysteine 211. The Cytoplasmic portion of the chain corresponds to 148 to 175; the sequence is SVFTLTTIAVDRYVVLVHPLRRRISLKL. The chain crosses the membrane as a helical span at residues 176–196; that stretch reads SAYAVLGIWALSAVLALPAAV. At 197–223 the chain is on the extracellular side; the sequence is HTYHVELKPHDVRLCEEFWGSQERQRQ. Residues 224 to 244 traverse the membrane as a helical segment; the sequence is IYAWGLLLGTYLLPLLAILLS. The Cytoplasmic portion of the chain corresponds to 245 to 276; the sequence is YVRVSVKLRNRVVPGSVTQSQADWDRARRRRT. Residues 277–297 form a helical membrane-spanning segment; sequence FCLLVVVVVVFALCWLPLHIF. Residues 298–317 lie on the Extracellular side of the membrane; the sequence is NLLRDLDPRAIDPYAFGLVQ. The helical transmembrane segment at 318 to 338 threads the bilayer; that stretch reads LLCHWLAMSSACYNPFIYAWL. Over 339 to 370 the chain is Cytoplasmic; the sequence is HDSFREELRKMLLSWPRKIVPHGQNMTVSVVI. The segment at 365-370 is required for interaction with GRIP1, GRIP2 and PICK1; sequence TVSVVI.

The protein belongs to the G-protein coupled receptor 1 family. Interacts through its C-terminal region with the PDZ domain-containing proteins GRIP1, GRIP2 and PICK1. Interacts with PDZ domains 4 and 5 of GRIP1 and with the PDZ domain of PICK1. As to expression, widely expressed, with highest levels in pituitary, cerebellum, and hypothalamus.

Its subcellular location is the cell membrane. Receptor for prolactin-releasing peptide (PrRP). Implicated in lactation, regulation of food intake and pain-signal processing. The chain is Prolactin-releasing peptide receptor (Prlhr) from Rattus norvegicus (Rat).